A 426-amino-acid polypeptide reads, in one-letter code: MGITARKVLGTPYANGAKLMFLGAGELGKETMIEAQRMGIEIVAVDRYANSPGMQVAHRSYVTNMKSERALLAIVEKEKPDAIIPEIEAINTDTLFKLEKEGFFVAPCANAVWTAMHRERLREAIASTGARTSKYEYATDLESFKAACKKIGFPCVSKPIMSSSGKGSYVLKSSKDVEKAFKEAAKARGSSDKIIVEEFIDFDVEITALSVRYLNGKGKPESKFVRPLGHYQIEGDYHASWHPWTDATDKKIDKLEKEIYDYAGRIMDKLGGYGLFAHEMFVDTKNGKVYANETACRPHDTGLVTIASMPFGYSEFALHAKAVLGIPIACEGKVIQPRSTAASHVILSHTEGWYPQFKVDGAYAPDTNVLIFGKPEAYEERRLGVVLATAGTVEDAKKKAQKAAHTVKVSANDKWAGQEITEKHYR.

N(1)-(5-phospho-beta-D-ribosyl)glycinamide is bound by residues 26–27 (EL) and Glu86. Residues Arg118, Lys158, 197 to 200 (EEFI), and Glu205 contribute to the ATP site. An ATP-grasp domain is found at 123 to 324 (EAIASTGART…EFALHAKAVL (202 aa)). The Mg(2+) site is built by Glu279 and Glu293. N(1)-(5-phospho-beta-D-ribosyl)glycinamide contacts are provided by residues Asp300, Lys374, and 381–382 (RR).

It belongs to the PurK/PurT family. Homodimer.

The catalysed reaction is N(1)-(5-phospho-beta-D-ribosyl)glycinamide + formate + ATP = N(2)-formyl-N(1)-(5-phospho-beta-D-ribosyl)glycinamide + ADP + phosphate + H(+). It functions in the pathway purine metabolism; IMP biosynthesis via de novo pathway; N(2)-formyl-N(1)-(5-phospho-D-ribosyl)glycinamide from N(1)-(5-phospho-D-ribosyl)glycinamide (formate route): step 1/1. Involved in the de novo purine biosynthesis. Catalyzes the transfer of formate to 5-phospho-ribosyl-glycinamide (GAR), producing 5-phospho-ribosyl-N-formylglycinamide (FGAR). Formate is provided by PurU via hydrolysis of 10-formyl-tetrahydrofolate. This is Formate-dependent phosphoribosylglycinamide formyltransferase from Methanocella arvoryzae (strain DSM 22066 / NBRC 105507 / MRE50).